The following is a 255-amino-acid chain: U2 small nuclear ribonucleoprotein A' (255 aa).

LRR repeat units follow at residues Arg-20–Leu-41, Gln-43–Arg-64, Arg-65–Ala-86, and Cys-89–Ala-110. Residues Asn-123–Met-161 enclose the LRRCT domain. Lys-172 carries the post-translational modification N6-acetyllysine; alternate. Residue Lys-172 forms a Glycyl lysine isopeptide (Lys-Gly) (interchain with G-Cter in SUMO2); alternate linkage. A phosphoserine mark is found at Ser-178 and Ser-197. Positions Lys-179–Gly-199 are disordered. Residue Lys-221 forms a Glycyl lysine isopeptide (Lys-Gly) (interchain with G-Cter in SUMO2) linkage. The disordered stretch occupies residues Gly-222–Ser-255. A phosphoserine mark is found at Ser-236 and Ser-255. The segment covering Asp-240 to Ser-255 has biased composition (acidic residues).

Belongs to the U2 small nuclear ribonucleoprotein A family. As to quaternary structure, identified in the spliceosome B complex. Identified in the spliceosome C complex. Found in a pre-mRNA splicing complex with SFRS4, SFRS5, SNRNP70, SNRPA1, SRRM1 and SRRM2. Found in a pre-mRNA exonic splicing enhancer (ESE) complex with SNRNP70, SNRPA1, SRRM1 and TRA2B. Contributes to the binding of stem loop IV of U2 snRNA with SNRPB2.

The protein localises to the nucleus. Functionally, involved in pre-mRNA splicing as component of the spliceosome. Associated with sn-RNP U2, where it contributes to the binding of stem loop IV of U2 snRNA. This Mus musculus (Mouse) protein is U2 small nuclear ribonucleoprotein A' (Snrpa1).